We begin with the raw amino-acid sequence, 206 residues long: Tumor protein D54 (206 aa).

Met-1 is subject to N-acetylmethionine. Residues 1-14 (MDSAGQDINLNSPN) show a composition bias toward polar residues. The disordered stretch occupies residues 1–24 (MDSAGQDINLNSPNKGLLSDSMTD). Ser-3, Ser-12, Ser-19, and Ser-21 each carry phosphoserine. The stretch at 38 to 82 (VEGLTEAEEEELRAELTKVEEEIVTLRQVLAAKERHCGELKRRLG) forms a coiled coil. Ser-96, Ser-149, and Ser-161 each carry phosphoserine. Position 163 is a phosphothreonine (Thr-163). Residue Ser-166 is modified to Phosphoserine. Thr-173 bears the Phosphothreonine mark. Positions 175-185 (KSKVVGDRENG) are enriched in basic and acidic residues. The disordered stretch occupies residues 175-206 (KSKVVGDRENGSDSLPSSAGSGDKPLSDPAPF). A phosphoserine mark is found at Ser-192 and Ser-195.

Belongs to the TPD52 family. In terms of assembly, forms a homodimer or heterodimer with other members of the family. Interacts with MAL2.

This is Tumor protein D54 (TPD52L2) from Pongo abelii (Sumatran orangutan).